We begin with the raw amino-acid sequence, 427 residues long: Septin-8-B (427 aa).

The region spanning 39-305 (QGFCFNILCV…ELYRRCKLEE (267 aa)) is the Septin-type G domain. The tract at residues 49–56 (GETGIGKS) is G1 motif. Residues 49-56 (GETGIGKS), G104, 185-193 (KADTISKSE), G239, and R254 each bind GTP. Residues 101 to 104 (DTVG) form a G3 motif region. The tract at residues 184–187 (AKAD) is G4 motif. Residues 320–407 (LQETYEAKRK…RRKVAMETLQ (88 aa)) are a coiled coil. Polar residues predominate over residues 406 to 418 (LQSQSFQATSQQP). Positions 406–427 (LQSQSFQATSQQPLKKDKDRKN) are disordered.

It belongs to the TRAFAC class TrmE-Era-EngA-EngB-Septin-like GTPase superfamily. Septin GTPase family.

This chain is Septin-8-B (sept8-b), found in Xenopus laevis (African clawed frog).